The sequence spans 429 residues: Adenylosuccinate synthetase (429 aa).

Residues G12–K18 and G40–T42 each bind GTP. D13 serves as the catalytic Proton acceptor. 2 residues coordinate Mg(2+): D13 and G40. IMP is bound by residues D13–K16, N38–H41, T128, R142, Q223, T238, and R302. The Proton donor role is filled by H41. T298–R304 contributes to the substrate binding site. GTP contacts are provided by residues R304, L330–D332, and S412–G414.

It belongs to the adenylosuccinate synthetase family. As to quaternary structure, homodimer. The cofactor is Mg(2+).

The protein localises to the cytoplasm. It carries out the reaction IMP + L-aspartate + GTP = N(6)-(1,2-dicarboxyethyl)-AMP + GDP + phosphate + 2 H(+). Its pathway is purine metabolism; AMP biosynthesis via de novo pathway; AMP from IMP: step 1/2. Plays an important role in the de novo pathway of purine nucleotide biosynthesis. Catalyzes the first committed step in the biosynthesis of AMP from IMP. In Limosilactobacillus fermentum (strain NBRC 3956 / LMG 18251) (Lactobacillus fermentum), this protein is Adenylosuccinate synthetase.